Consider the following 372-residue polypeptide: MSPGLDLEQSFSQALEGLGLSAQAARMLWLPFPMLLVLVAAVVGVLVTVWLERKISAAVQQRVGPEYAGALGVLQPLADGLKLLVKEDIIPDRADSILFTLGPVLVVVPVILSWLIVPFGQNLLISDVGVGIFLWISLSSVQPIGLLMSGYASNNKYSLLGGLRAAAQSISYEIPLALAVLAVVMMSNSLSTVDIVNQQTGAGVLSWNIWRQPVGFLIFWICALAECERLPFDLPEAEEELVAGYQTEYSGMKFALFYLGSYINLVLSALLVSILYLGGWGFPIPVEWLASWLGQPIDAPLVQLITGTVGIVMTVLKAYLLVFIAILLRWTTPRVRIDQLLDLGWKFLLPLALVNLLVTAALKLAFPVAFGG.

8 consecutive transmembrane segments (helical) span residues 27–47 (MLWLPFPMLLVLVAAVVGVLV), 97–117 (ILFTLGPVLVVVPVILSWLIV), 128–148 (VGVGIFLWISLSSVQPIGLLM), 166–186 (AAQSISYEIPLALAVLAVVMM), 204–224 (VLSWNIWRQPVGFLIFWICAL), 266–286 (VLSALLVSILYLGGWGFPIPV), 308–328 (TVGIVMTVLKAYLLVFIAILL), and 347–367 (FLLPLALVNLLVTAALKLAFP).

It belongs to the complex I subunit 1 family. As to quaternary structure, NDH-1 is composed of at least 11 different subunits.

Its subcellular location is the cellular thylakoid membrane. It catalyses the reaction a plastoquinone + NADH + (n+1) H(+)(in) = a plastoquinol + NAD(+) + n H(+)(out). The catalysed reaction is a plastoquinone + NADPH + (n+1) H(+)(in) = a plastoquinol + NADP(+) + n H(+)(out). In terms of biological role, NDH-1 shuttles electrons from an unknown electron donor, via FMN and iron-sulfur (Fe-S) centers, to quinones in the respiratory and/or the photosynthetic chain. The immediate electron acceptor for the enzyme in this species is believed to be plastoquinone. Couples the redox reaction to proton translocation, and thus conserves the redox energy in a proton gradient. In Synechococcus sp. (strain CC9311), this protein is NAD(P)H-quinone oxidoreductase subunit 1.